Consider the following 574-residue polypeptide: GRB2-associated-binding protein 4 (574 aa).

Residues 1–33 (MSLPSPSPSRELCPPDPAFAPLSSWPGSGPAGG) form a disordered region. The 114-residue stretch at 39-152 (HVLYSGWLRK…WVQSICQICG (114 aa)) folds into the PH domain. 4 disordered regions span residues 176–200 (PAEP…PVSH), 215–234 (LRSH…ASFS), 293–331 (SLAS…RPAE), and 418–513 (PPVN…PRST). The span at 181–193 (CSHQHLPQEQEPT) shows a compositional bias: polar residues. Composition is skewed to polar residues over residues 302-318 (GSLT…SGKY) and 424-442 (LKPN…NNRV). Positions 457–478 (SGTSHTFDSSSSQHPISTQSIT) are enriched in low complexity. Residues 502–513 (GGTSSSAPPRST) are compositionally biased toward polar residues.

Belongs to the GAB family.

The chain is GRB2-associated-binding protein 4 (GAB4) from Homo sapiens (Human).